Consider the following 527-residue polypeptide: Bromodomain-containing protein 9 (527 aa).

A compositionally biased stretch (basic residues) spans 1–16 (MNVSVTKRRKKKKKKK). Residues 1–54 (MNVSVTKRRKKKKKKKSEKEKDKYLDEDERRRRKEEKKRKREKEQCDSEGETEV) form a disordered region. Over residues 17-30 (SEKEKDKYLDEDER) the composition is skewed to basic and acidic residues. Residues 31–41 (RRRKEEKKRKR) show a composition bias toward basic residues. Positions 78–182 (NESTPLQQLL…HTGFKMMSKA (105 aa)) constitute a Bromo domain. The segment at 156–158 (TYN) is histone H4K5ac H4K8ac and histone H4K5bu H4K8bu binding. Residues 468-478 (DFHDVHNDRGG) show a composition bias toward basic and acidic residues. The segment at 468-527 (DFHDVHNDRGGSRPSSSSSMSNNSERDHHLGSPSRISVGEQQDIHDPYEFLQSPETDNQN) is disordered. Positions 479–490 (SRPSSSSSMSNN) are enriched in low complexity.

As to quaternary structure, binds acetylated histones H3 and H4. Binds butyrylated histone H4.

The protein localises to the nucleus. Its function is as follows. Plays a role in chromatin remodeling and regulation of transcription. Acts as a chromatin reader that recognizes and binds acylated histones: binds histones that are acetylated and/or butyrylated. This chain is Bromodomain-containing protein 9 (brd9), found in Xenopus laevis (African clawed frog).